Consider the following 312-residue polypeptide: Malate dehydrogenase (312 aa).

Residues 7–13 and D34 each bind NAD(+); that span reads GAAGGIG. Positions 81 and 87 each coordinate substrate. Residues N94 and 117–119 each bind NAD(+); that span reads ITN. Substrate-binding residues include N119 and R153. Residue H177 is the Proton acceptor of the active site. M227 lines the NAD(+) pocket.

Belongs to the LDH/MDH superfamily. MDH type 1 family. Homodimer.

It catalyses the reaction (S)-malate + NAD(+) = oxaloacetate + NADH + H(+). In terms of biological role, catalyzes the reversible oxidation of malate to oxaloacetate. The chain is Malate dehydrogenase from Photobacterium profundum (strain SS9).